The sequence spans 743 residues: Threonine synthase-like 1 (743 aa).

At K281 the chain carries N6-acetyllysine. K351 is modified (N6-(pyridoxal phosphate)lysine).

It belongs to the threonine synthase family. The cofactor is pyridoxal 5'-phosphate.

This Homo sapiens (Human) protein is Threonine synthase-like 1 (THNSL1).